The chain runs to 584 residues: Lamin-B1 (584 aa).

Positions 1–22 (MAAAVAPLSPQPRGAAASAALS) are disordered. The segment at 2–33 (AAAVAPLSPQPRGAAASAALSPTRISRLQEKE) is head. Position 22 is a phosphoserine (serine 22). The region spanning 31–387 (EKEELRQLND…KLLESEEERL (357 aa)) is the IF rod domain. Residues 34 to 70 (ELRQLNDRLAVYIDKVRSLETENSALQRRVSEREQVC) form a coil 1A region. A coil 1B region spans residues 81 to 218 (FETELADARK…NVYEEEIKET (138 aa)). The tract at residues 243-385 (QALKEIREQH…YRKLLESEEE (143 aa)) is coil 2. Residues 386 to 584 (RLRLSPGPSS…RKPERSCVVM (199 aa)) form a tail region. 2 disordered regions span residues 388 to 431 (RLSP…SVSI) and 548 to 584 (TVNE…CVVM). Over residues 394–408 (SSRVTVSRASSSRSV) the composition is skewed to low complexity. Residues 414–419 (KRKRID) carry the Nuclear localization signal motif. An LTD domain is found at 429 to 545 (VSISHSASAT…EEVAQRSTVF (117 aa)). The segment covering 551-565 (EGEEEEEEGEEEILE) has biased composition (acidic residues). The span at 575 to 584 (RKPERSCVVM) shows a compositional bias: basic and acidic residues. Cysteine methyl ester is present on cysteine 581. Cysteine 581 carries the S-farnesyl cysteine lipid modification. Positions 582-584 (VVM) are cleaved as a propeptide — removed in mature form.

Belongs to the intermediate filament family. As to quaternary structure, homodimer. Lamin dimers then assemble into dimeric head-to-tail polymers. Ultimately, two head-to-tail polymers assemble laterally into a protofilament with a uniformly shaped rod of 3.5 nm in diameter. In terms of processing, phosphorylation plays a key role in lamin organization, subcellular localization and nuclear envelope disintegration. Phosphorylation by CDK1 at Ser-22 at the onset of mitosis drives lamin disassembly and nuclear envelope breakdown.

The protein resides in the nucleus lamina. The protein localises to the nucleus envelope. Its subcellular location is the nucleus. It localises to the nucleoplasm. It is found in the nucleus matrix. In terms of biological role, lamins are intermediate filament proteins that assemble into a filamentous meshwork, and which constitute the major components of the nuclear lamina, a fibrous layer on the nucleoplasmic side of the inner nuclear membrane. Lamins provide a framework for the nuclear envelope, bridging the nuclear envelope and chromatin. Plays an important role in nuclear assembly, chromatin organization, nuclear membrane and telomere dynamics. The chain is Lamin-B1 (LMNB1) from Gallus gallus (Chicken).